A 169-amino-acid polypeptide reads, in one-letter code: Thaumatin-like pathogenesis-related protein 4 (169 aa).

Residues 1–21 (MATSSTVLFLLLAVFAASASA) form the signal peptide.

It belongs to the thaumatin family.

Its function is as follows. Associated with resistance against stem rust fungi. This is Thaumatin-like pathogenesis-related protein 4 (RASTL-4) from Avena sativa (Oat).